Consider the following 920-residue polypeptide: Disintegrin and metalloproteinase domain-containing protein 19 (920 aa).

The first 26 residues, methionine 1 to cysteine 26, serve as a signal peptide directing secretion. Positions glutamate 27–arginine 204 are excised as a propeptide. Over glutamate 27–serine 703 the chain is Extracellular. A Cysteine switch motif is present at residues serine 131 to glycine 138. Cysteine 133 contributes to the Zn(2+) binding site. Residue asparagine 145 is glycosylated (N-linked (GlcNAc...) asparagine). Positions lysine 211–proline 409 constitute a Peptidase M12B domain. Intrachain disulfides connect cysteine 321-cysteine 404, cysteine 361-cysteine 388, and cysteine 362-cysteine 371. Histidine 346 contributes to the Zn(2+) binding site. The active site involves glutamate 347. 2 residues coordinate Zn(2+): histidine 350 and histidine 356. The Disintegrin domain occupies glycine 417–aspartate 503. 2 N-linked (GlcNAc...) asparagine glycosylation sites follow: asparagine 445 and asparagine 448. Cysteine 475 and cysteine 495 are disulfide-bonded. Asparagine 649 is a glycosylation site (N-linked (GlcNAc...) asparagine). Residues glutamate 654–asparagine 686 form the EGF-like domain. 3 disulfides stabilise this stretch: cysteine 658–cysteine 668, cysteine 662–cysteine 674, and cysteine 676–cysteine 685. A helical membrane pass occupies residues valine 704 to leucine 724. Topologically, residues cysteine 725–isoleucine 920 are cytoplasmic. A disordered region spans residues serine 755–isoleucine 920. Positions phenylalanine 767–glutamate 783 are enriched in polar residues. Over residues alanine 825–arginine 834 the composition is skewed to basic and acidic residues. The SH3-binding signature appears at arginine 835–proline 846. 2 stretches are compositionally biased toward pro residues: residues arginine 835–proline 846 and threonine 888–lysine 903.

In terms of assembly, interacts with SH3PXD2A. Zn(2+) serves as cofactor. In terms of processing, the precursor is cleaved by a furin endopeptidase. As to expression, widely expressed, with the highest expression in bone, heart and lung, followed by brain and spleen and relatively low expression in liver, skeletal muscle, kidney and testis. In bone, primarily expressed in cell of the osteoblast lineage and not detected in mature osteoclasts.

The protein localises to the membrane. Functionally, participates in the proteolytic processing of beta-type neuregulin isoforms which are involved in neurogenesis and synaptogenesis, suggesting a regulatory role in glial cell. Also cleaves alpha-2 macroglobulin. May be involved in osteoblast differentiation and/or osteoblast activity in bone. The protein is Disintegrin and metalloproteinase domain-containing protein 19 (Adam19) of Mus musculus (Mouse).